The chain runs to 250 residues: Archaeal flagellar motor scaffold protein FlaX (250 aa).

Residues 1 to 9 (MAIQDLLQS) are Extracellular-facing. The helical transmembrane segment at 10–30 (SLFIILIGVGIPIAAFLEILF) threads the bilayer. Topologically, residues 31–250 (RVILPKTKRV…MILEGGGVNG (220 aa)) are cytoplasmic. A compositionally biased stretch (polar residues) spans 42-61 (TQQSPQNISQEQRFPTQQKP). Positions 42–72 (TQQSPQNISQEQRFPTQQKPANDETSKYSSD) are disordered. The span at 62 to 72 (ANDETSKYSSD) shows a compositional bias: basic and acidic residues.

As to quaternary structure, the S.acidocaldarius archaellum assembly machinery and its filament consist of seven proteins (FlaB, FlaF, FlaG, FlaH, FlaI, FlaJ and FlaX). FlaX assembles into ring-shaped oligomers. Interacts directly with FlaH and the motor ATPase FlaI.

It localises to the archaeal flagellum. Its subcellular location is the cell membrane. With respect to regulation, the presence of the flagellar core components FlaH, FlaI and FlaJ seems to be crucial for the stability of FlaX. In terms of biological role, component of the archaellum. FlaX, FlaH and FlaI form the core cytoplasmic motor complex of the crenarchaeal archaellum. FlaX forms a ring that may act as a membrane-bound cytoplasmic scaffold that guides the assembly of the archaellum motor complex. Is essential for archaellum assembly. The protein is Archaeal flagellar motor scaffold protein FlaX of Sulfolobus acidocaldarius (strain ATCC 33909 / DSM 639 / JCM 8929 / NBRC 15157 / NCIMB 11770).